Reading from the N-terminus, the 174-residue chain is Crossover junction endodeoxyribonuclease RuvC (174 aa).

Residues Asp-8, Glu-67, and Asp-139 contribute to the active site. Asp-8, Glu-67, and Asp-139 together coordinate Mg(2+).

It belongs to the RuvC family. Homodimer which binds Holliday junction (HJ) DNA. The HJ becomes 2-fold symmetrical on binding to RuvC with unstacked arms; it has a different conformation from HJ DNA in complex with RuvA. In the full resolvosome a probable DNA-RuvA(4)-RuvB(12)-RuvC(2) complex forms which resolves the HJ. It depends on Mg(2+) as a cofactor.

The protein localises to the cytoplasm. The catalysed reaction is Endonucleolytic cleavage at a junction such as a reciprocal single-stranded crossover between two homologous DNA duplexes (Holliday junction).. Functionally, the RuvA-RuvB-RuvC complex processes Holliday junction (HJ) DNA during genetic recombination and DNA repair. Endonuclease that resolves HJ intermediates. Cleaves cruciform DNA by making single-stranded nicks across the HJ at symmetrical positions within the homologous arms, yielding a 5'-phosphate and a 3'-hydroxyl group; requires a central core of homology in the junction. The consensus cleavage sequence is 5'-(A/T)TT(C/G)-3'. Cleavage occurs on the 3'-side of the TT dinucleotide at the point of strand exchange. HJ branch migration catalyzed by RuvA-RuvB allows RuvC to scan DNA until it finds its consensus sequence, where it cleaves and resolves the cruciform DNA. This Pseudomonas savastanoi pv. phaseolicola (strain 1448A / Race 6) (Pseudomonas syringae pv. phaseolicola (strain 1448A / Race 6)) protein is Crossover junction endodeoxyribonuclease RuvC.